Consider the following 132-residue polypeptide: Small ribosomal subunit protein uS19 (132 aa).

It belongs to the universal ribosomal protein uS19 family.

Protein S19 forms a complex with S13 that binds strongly to the 16S ribosomal RNA. In Pyrococcus horikoshii (strain ATCC 700860 / DSM 12428 / JCM 9974 / NBRC 100139 / OT-3), this protein is Small ribosomal subunit protein uS19 (rps19).